Reading from the N-terminus, the 416-residue chain is Advanced glycosylation end product-specific receptor (416 aa).

An N-terminal signal peptide occupies residues 1–22 (MAAGAVVGAWMLVLSLGGTVTG). In terms of domain architecture, Ig-like V-type spans 23 to 115 (DQNITARIGK…KETKSNYRVR (93 aa)). Residues 23–352 (DQNITARIGK…VEGPGLETLA (330 aa)) lie on the Extracellular side of the membrane. N-linked (GlcNAc...) asparagine glycosylation is found at N25 and N80. Cystine bridges form between C38–C98 and C143–C207. Ig-like C2-type domains follow at residues 123 to 220 (PEIV…RALH) and 238 to 327 (PNVD…RAVS). A helical transmembrane segment spans residues 353-373 (LTLGILGGLGTVALLIGVIVW). Residues 374 to 416 (HRRRQRKGQERKVPENQEEEEEERAELNQPEEPEAAESSTGGP) lie on the Cytoplasmic side of the membrane. Positions 377–416 (RQRKGQERKVPENQEEEEEERAELNQPEEPEAAESSTGGP) are disordered. Positions 389–408 (NQEEEEEERAELNQPEEPEA) are enriched in acidic residues.

As to quaternary structure, constitutive homodimer; disulfide-linked. Forms homooligomers. Interacts with S100A1 and APP. Interacts with S100B, S100A12 and S100A14. Interacts with TIRAP. Interacts with HMGB1. Interacts with LGP2; this interaction plays an important role in AGER-mediated pro-inflammatory responses and cytokine release. Interacts with double-strand break repair protein MRE11 which is a core component of the MRN complex; the interaction enhances MRE11 endonuclease activity and promotes DNA repair. Interacts with the MCM2-7 complex via interaction with complex member MCM2; the interaction is increased following DNA replication stress and stabilizes the MCM2-7 complex at replication forks. Phosphorylated on its cytoplasmic domain by PKCzeta/PRKCZ upon ligand binding. Phosphorylated by ATM following DNA damage. In terms of processing, targeted by the ubiquitin E3 ligase subunit FBXO10 to mediate its ubiquitination and degradation. As to expression, endothelial cells.

It localises to the cell membrane. Its subcellular location is the cell projection. It is found in the phagocytic cup. The protein localises to the early endosome. The protein resides in the nucleus. Functionally, cell surface pattern recognition receptor that senses endogenous stress signals with a broad ligand repertoire including advanced glycation end products, S100 proteins, high-mobility group box 1 protein/HMGB1, amyloid beta/APP oligomers, nucleic acids, histones, phospholipids and glycosaminoglycans. Advanced glycosylation end products are nonenzymatically glycosylated proteins which accumulate in vascular tissue in aging and at an accelerated rate in diabetes. These ligands accumulate at inflammatory sites during the pathogenesis of various diseases including diabetes, vascular complications, neurodegenerative disorders and cancers, and RAGE transduces their binding into pro-inflammatory responses. Upon ligand binding, uses TIRAP and MYD88 as adapters to transduce the signal ultimately leading to the induction of inflammatory cytokines IL6, IL8 and TNFalpha through activation of NF-kappa-B. Interaction with S100A12 on endothelium, mononuclear phagocytes, and lymphocytes triggers cellular activation, with generation of key pro-inflammatory mediators. Interaction with S100B after myocardial infarction may play a role in myocyte apoptosis by activating ERK1/2 and p53/TP53 signaling. Contributes to the translocation of amyloid-beta peptide (ABPP) across the cell membrane from the extracellular to the intracellular space in cortical neurons. ABPP-initiated RAGE signaling, especially stimulation of p38 mitogen-activated protein kinase (MAPK), has the capacity to drive a transport system delivering ABPP as a complex with RAGE to the intraneuronal space. Participates in endothelial albumin transcytosis together with HMGB1 through the RAGE/SRC/Caveolin-1 pathway, leading to endothelial hyperpermeability. Mediates the loading of HMGB1 in extracellular vesicles (EVs) that shuttle HMGB1 to hepatocytes by transferrin-mediated endocytosis and subsequently promote hepatocyte pyroptosis by activating the NLRP3 inflammasome. Binds to DNA and promotes extracellular hypomethylated DNA (CpG DNA) uptake by cells via the endosomal route to activate inflammatory responses. Mediates phagocytosis by non-professional phagocytes (NPP) and this is enhanced by binding to ligands including RNA, DNA, HMGB1 and histones. Promotes NPP-mediated phagocytosis of Saccharomyces cerevisiae spores by binding to RNA attached to the spore wall. Also promotes NPP-mediated phagocytosis of apoptotic cells. Following DNA damage, recruited to DNA double-strand break sites where it colocalizes with the MRN repair complex via interaction with double-strand break repair protein MRE11. Enhances the endonuclease activity of MRE11, promoting the end resection of damaged DNA. Promotes DNA damage repair in trophoblasts which enhances trophoblast invasion and contributes to placental development and maintenance. Protects cells from DNA replication stress by localizing to damaged replication forks where it stabilizes the MCM2-7 complex and promotes faithful progression of the replication fork. The sequence is that of Advanced glycosylation end product-specific receptor (AGER) from Bos taurus (Bovine).